The following is a 1337-amino-acid chain: DNA-directed RNA polymerase subunit beta' (1337 aa).

Cysteine 60, cysteine 62, cysteine 75, and cysteine 78 together coordinate Zn(2+). Mg(2+) contacts are provided by aspartate 536, aspartate 538, and aspartate 540. Residues cysteine 895, cysteine 974, cysteine 981, and cysteine 984 each contribute to the Zn(2+) site.

It belongs to the RNA polymerase beta' chain family. In terms of assembly, the RNAP catalytic core consists of 2 alpha, 1 beta, 1 beta' and 1 omega subunit. When a sigma factor is associated with the core the holoenzyme is formed, which can initiate transcription. It depends on Mg(2+) as a cofactor. The cofactor is Zn(2+).

The enzyme catalyses RNA(n) + a ribonucleoside 5'-triphosphate = RNA(n+1) + diphosphate. Functionally, DNA-dependent RNA polymerase catalyzes the transcription of DNA into RNA using the four ribonucleoside triphosphates as substrates. This is DNA-directed RNA polymerase subunit beta' from Bifidobacterium adolescentis (strain ATCC 15703 / DSM 20083 / NCTC 11814 / E194a).